A 423-amino-acid polypeptide reads, in one-letter code: Mannan endo-1,4-beta-mannosidase (423 aa).

The first 27 residues, Met1 to Gly27, serve as a signal peptide directing secretion. Residues Met56–Arg409 form the GH26 domain. Substrate contacts are provided by Glu121, His143, and Trp162. The active-site Proton donor is the Glu212. Residues Trp217 and Tyr285 each contribute to the substrate site. Glu320 (nucleophile) is an active-site residue. Residues Trp360–Arg361 and His377 contribute to the substrate site.

The protein belongs to the glycosyl hydrolase 26 family. In terms of assembly, homodimer.

It carries out the reaction Random hydrolysis of (1-&gt;4)-beta-D-mannosidic linkages in mannans, galactomannans and glucomannans.. Catalyzes the endo hydrolysis of beta-1,4-linked mannan and galactomannan, but displays little activity towards other polysaccharides located in the plant cell wall. Preferentially hydrolyzes the larger oligosaccharides and has greater activity against non-substituted polysaccharides. It displays tight specificity for mannose at both the -2 and the -1 subsites. Appears to act in synergy with alpha-galactosidase (AgaA) to elicit hydrolysis of galactomannan. This chain is Mannan endo-1,4-beta-mannosidase, found in Cellvibrio japonicus (strain Ueda107) (Pseudomonas fluorescens subsp. cellulosa).